Here is an 87-residue protein sequence, read N- to C-terminus: Putative defensin-like protein 169 (87 aa).

Residues 1–21 (MKKTFSFTVLILFVIPLLVTG) form the signal peptide. 4 cysteine pairs are disulfide-bonded: C36/C86, C48/C74, C53/C80, and C57/C82.

Belongs to the DEFL family.

The protein resides in the secreted. The protein is Putative defensin-like protein 169 of Arabidopsis thaliana (Mouse-ear cress).